Here is a 112-residue protein sequence, read N- to C-terminus: Small ribosomal subunit protein bS6 (112 aa).

The protein belongs to the bacterial ribosomal protein bS6 family.

Functionally, binds together with bS18 to 16S ribosomal RNA. In Chlamydia caviae (strain ATCC VR-813 / DSM 19441 / 03DC25 / GPIC) (Chlamydophila caviae), this protein is Small ribosomal subunit protein bS6.